Consider the following 394-residue polypeptide: Elongation factor Tu (394 aa).

The region spanning 10–205 (KPHMNVGTIG…TMDNYFDLPE (196 aa)) is the tr-type G domain. The tract at residues 19–26 (GHVDHGKT) is G1. Residue 19 to 26 (GHVDHGKT) coordinates GTP. Thr26 serves as a coordination point for Mg(2+). The G2 stretch occupies residues 61–65 (GITIN). The segment at 82–85 (DCPG) is G3. GTP is bound by residues 82–86 (DCPGH) and 137–140 (NKLD). Positions 137-140 (NKLD) are G4. The tract at residues 173–175 (SAF) is G5.

The protein belongs to the TRAFAC class translation factor GTPase superfamily. Classic translation factor GTPase family. EF-Tu/EF-1A subfamily. Monomer.

Its subcellular location is the cytoplasm. It catalyses the reaction GTP + H2O = GDP + phosphate + H(+). GTP hydrolase that promotes the GTP-dependent binding of aminoacyl-tRNA to the A-site of ribosomes during protein biosynthesis. This Borrelia duttonii (strain Ly) protein is Elongation factor Tu.